The sequence spans 54 residues: Ovomucoid (54 aa).

The Kazal-like domain occupies 4 to 54 (VDCSDYPKPVCSLEYMPLCGSDNKTYGNKCNFCNAVADSNGTLTLSHFGKC). 3 disulfide bridges follow: C6–C36, C14–C33, and C22–C54. The N-linked (GlcNAc...) asparagine glycan is linked to N43.

It localises to the secreted. This Guira guira (Guira cuckoo) protein is Ovomucoid.